The following is a 91-amino-acid chain: HssA/B-like protein 52 (91 aa).

Disordered stretches follow at residues 1–20 (MTLF…SKSS) and 72–91 (GGCG…CCGI).

It belongs to the hssA/B family.

The chain is HssA/B-like protein 52 (hssl52) from Dictyostelium discoideum (Social amoeba).